The chain runs to 113 residues: Large ribosomal subunit protein bL19 (113 aa).

The protein belongs to the bacterial ribosomal protein bL19 family.

Its function is as follows. This protein is located at the 30S-50S ribosomal subunit interface and may play a role in the structure and function of the aminoacyl-tRNA binding site. In Natranaerobius thermophilus (strain ATCC BAA-1301 / DSM 18059 / JW/NM-WN-LF), this protein is Large ribosomal subunit protein bL19.